Consider the following 121-residue polypeptide: MARIAGVDIPNDKRVVISLTYVYGIGLATSKKILAAAGVSEDIRVKDLTSDQEDAIRREVDTIKVEGDLRREVNLNIKRLMEIGSYRGIRHRRGLPVRGQNTKNNARTRKGKAVAIAGKKK.

The segment at 95–121 (LPVRGQNTKNNARTRKGKAVAIAGKKK) is disordered. Residues 106–121 (ARTRKGKAVAIAGKKK) are compositionally biased toward basic residues.

It belongs to the universal ribosomal protein uS13 family. Part of the 30S ribosomal subunit. Forms a loose heterodimer with protein S19. Forms two bridges to the 50S subunit in the 70S ribosome.

Functionally, located at the top of the head of the 30S subunit, it contacts several helices of the 16S rRNA. In the 70S ribosome it contacts the 23S rRNA (bridge B1a) and protein L5 of the 50S subunit (bridge B1b), connecting the 2 subunits; these bridges are implicated in subunit movement. Contacts the tRNAs in the A and P-sites. This is Small ribosomal subunit protein uS13 from Streptococcus equi subsp. zooepidemicus (strain H70).